A 268-amino-acid chain; its full sequence is Tryptophan synthase alpha chain (268 aa).

Active-site proton acceptor residues include Glu49 and Asp60.

Belongs to the TrpA family. As to quaternary structure, tetramer of two alpha and two beta chains.

The catalysed reaction is (1S,2R)-1-C-(indol-3-yl)glycerol 3-phosphate + L-serine = D-glyceraldehyde 3-phosphate + L-tryptophan + H2O. Its pathway is amino-acid biosynthesis; L-tryptophan biosynthesis; L-tryptophan from chorismate: step 5/5. In terms of biological role, the alpha subunit is responsible for the aldol cleavage of indoleglycerol phosphate to indole and glyceraldehyde 3-phosphate. The chain is Tryptophan synthase alpha chain from Yersinia enterocolitica serotype O:8 / biotype 1B (strain NCTC 13174 / 8081).